The chain runs to 470 residues: Neuraminidase (470 aa).

The Intravirion portion of the chain corresponds to 1 to 14; the sequence is MNPNQKIITIGSIS. The involved in apical transport and lipid raft association stretch occupies residues 11-32; sequence GSISLGLVVFNVLLHVVSIIVT. The chain crosses the membrane as a helical span at residues 15 to 35; it reads LGLVVFNVLLHVVSIIVTVLI. Positions 32–86 are hypervariable stalk region; that stretch reads TVLILGRGGNNGICNETVVREYNETVRIEKVTQWHNTSVVEYMPYWNEGTYMNNT. Residues 36-470 are Virion surface-facing; the sequence is LGRGGNNGIC…AILPFDIDKM (435 aa). Residues N46, N54, N67, and N84 are each glycosylated (N-linked (GlcNAc...) asparagine; by host). Residues 89 to 470 are head of neuraminidase; sequence ICDVKGFAPF…AILPFDIDKM (382 aa). 8 disulfides stabilise this stretch: C90-C417, C122-C127, C182-C229, C231-C236, C277-C290, C279-C288, C316-C335, and C421-C446. R116 contacts substrate. N-linked (GlcNAc...) asparagine; by host glycosylation occurs at N144. The active-site Proton donor/acceptor is D149. Residue R150 participates in substrate binding. Substrate is bound at residue 275–276; sequence EE. A substrate-binding site is contributed by R291. D292 provides a ligand contact to Ca(2+). N293 carries an N-linked (GlcNAc...) asparagine; by host glycan. Residues G296 and D322 each contribute to the Ca(2+) site. Residue R368 participates in substrate binding. The N-linked (GlcNAc...) asparagine; by host glycan is linked to N398. The active-site Nucleophile is the Y402.

The protein belongs to the glycosyl hydrolase 34 family. Homotetramer. Ca(2+) is required as a cofactor. N-glycosylated.

Its subcellular location is the virion membrane. The protein localises to the host apical cell membrane. The enzyme catalyses Hydrolysis of alpha-(2-&gt;3)-, alpha-(2-&gt;6)-, alpha-(2-&gt;8)- glycosidic linkages of terminal sialic acid residues in oligosaccharides, glycoproteins, glycolipids, colominic acid and synthetic substrates.. Inhibited by the neuraminidase inhibitors zanamivir (Relenza) and oseltamivir (Tamiflu). These drugs interfere with the release of progeny virus from infected cells and are effective against all influenza strains. Resistance to neuraminidase inhibitors is quite rare. Its function is as follows. Catalyzes the removal of terminal sialic acid residues from viral and cellular glycoconjugates. Cleaves off the terminal sialic acids on the glycosylated HA during virus budding to facilitate virus release. Additionally helps virus spread through the circulation by further removing sialic acids from the cell surface. These cleavages prevent self-aggregation and ensure the efficient spread of the progeny virus from cell to cell. Otherwise, infection would be limited to one round of replication. Described as a receptor-destroying enzyme because it cleaves a terminal sialic acid from the cellular receptors. May facilitate viral invasion of the upper airways by cleaving the sialic acid moieties on the mucin of the airway epithelial cells. Likely to plays a role in the budding process through its association with lipid rafts during intracellular transport. May additionally display a raft-association independent effect on budding. Plays a role in the determination of host range restriction on replication and virulence. Sialidase activity in late endosome/lysosome traffic seems to enhance virus replication. This is Neuraminidase from Aves (Horse).